Consider the following 301-residue polypeptide: MKFLSFNYKDAESYGVKVKRKDAVWDLKKVFAEFGEGDFHPQTLLEGLQQNQTLDFQEQVRKAVVAAEDSGKADEFKIAFNDIEFLPPVTPPNNVIAFGRNYQDHASELNHEVQRLYVFTKAASSLTGDESTIPNHKDITDQLDYEGELGIVIGKSGEKIPKALALDYIYGYTIINDITDRKAQNEQDQAFLSKSLTGGCPMGPYIVTKDELPTPENVNIVTKVNNDIRQDGNTSQMINKIDDLIEEISKYVALHPGDIIATGTPAGVGAGLQPPQFLQPGDEVKVTIDNIGTLTTYIAKD.

Glu146, Glu148, and Asp177 together coordinate a divalent metal cation.

It belongs to the FAH family.

This is an uncharacterized protein from Staphylococcus haemolyticus (strain JCSC1435).